The chain runs to 201 residues: Diadenylate cyclase CdaS (201 aa).

The DAC domain maps to glutamine 54–leucine 201.

It belongs to the adenylate cyclase family. DacB/CdaS subfamily. In terms of assembly, probably forms a homohexamer. Mg(2+) is required as a cofactor.

The catalysed reaction is 2 ATP = 3',3'-c-di-AMP + 2 diphosphate. Its function is as follows. One of 3 paralogous diadenylate cyclases (DAC) in this bacteria catalyzing the condensation of 2 ATP molecules into cyclic di-AMP (c-di-AMP). It has slow DAC activity with ADP as a substrate and may have weak ADPase activity. Required for efficient spore formation, whereas in B.subtilis, it is required for efficient spore germination. It is produced under the control of different sigma factors in the two bacteria. It is also required for parasporal crystal formation. The protein is Diadenylate cyclase CdaS of Bacillus thuringiensis (strain BMB171).